Here is a 296-residue protein sequence, read N- to C-terminus: tRNA uridine(34) hydroxylase (296 aa).

A Rhodanese domain is found at 130–225 (RGDDVVFFDG…YGEAYGNDGY (96 aa)). Cysteine 185 serves as the catalytic Cysteine persulfide intermediate.

It belongs to the TrhO family.

The enzyme catalyses uridine(34) in tRNA + AH2 + O2 = 5-hydroxyuridine(34) in tRNA + A + H2O. Catalyzes oxygen-dependent 5-hydroxyuridine (ho5U) modification at position 34 in tRNAs. This is tRNA uridine(34) hydroxylase from Corynebacterium kroppenstedtii (strain DSM 44385 / JCM 11950 / CIP 105744 / CCUG 35717).